The primary structure comprises 221 residues: UPF0502 protein CPS_0106 (221 aa).

This sequence belongs to the UPF0502 family.

The chain is UPF0502 protein CPS_0106 from Colwellia psychrerythraea (strain 34H / ATCC BAA-681) (Vibrio psychroerythus).